A 489-amino-acid chain; its full sequence is Glutamate--tRNA ligase (489 aa).

A 'HIGH' region motif is present at residues 11 to 21 (PSPTGHLHIGG). Residues 253-257 (KLSKR) carry the 'KMSKS' region motif. Lys-256 provides a ligand contact to ATP.

This sequence belongs to the class-I aminoacyl-tRNA synthetase family. Glutamate--tRNA ligase type 1 subfamily. As to quaternary structure, monomer.

Its subcellular location is the cytoplasm. The enzyme catalyses tRNA(Glu) + L-glutamate + ATP = L-glutamyl-tRNA(Glu) + AMP + diphosphate. Catalyzes the attachment of glutamate to tRNA(Glu) in a two-step reaction: glutamate is first activated by ATP to form Glu-AMP and then transferred to the acceptor end of tRNA(Glu). The chain is Glutamate--tRNA ligase from Geobacillus stearothermophilus (Bacillus stearothermophilus).